Consider the following 342-residue polypeptide: tRNA N6-adenosine threonylcarbamoyltransferase (342 aa).

H120 and H124 together coordinate Fe cation. Substrate-binding positions include 142-146, D175, G188, D192, and N281; that span reads VVSGG. D310 is a Fe cation binding site.

This sequence belongs to the KAE1 / TsaD family. Fe(2+) serves as cofactor.

Its subcellular location is the cytoplasm. It catalyses the reaction L-threonylcarbamoyladenylate + adenosine(37) in tRNA = N(6)-L-threonylcarbamoyladenosine(37) in tRNA + AMP + H(+). In terms of biological role, required for the formation of a threonylcarbamoyl group on adenosine at position 37 (t(6)A37) in tRNAs that read codons beginning with adenine. Is involved in the transfer of the threonylcarbamoyl moiety of threonylcarbamoyl-AMP (TC-AMP) to the N6 group of A37, together with TsaE and TsaB. TsaD likely plays a direct catalytic role in this reaction. The sequence is that of tRNA N6-adenosine threonylcarbamoyltransferase from Geobacillus thermodenitrificans (strain NG80-2).